We begin with the raw amino-acid sequence, 123 residues long: Gamma-synuclein (123 aa).

2 consecutive repeat copies span residues 20-30 (EKTKQGVTEAA) and 31-41 (EKTKEGVMYVG). The segment at 20–67 (EKTKQGVTEAAEKTKEGVMYVGTKTKENVVQSVTSVAEKTKEQANAVS) is 4 X 11 AA tandem repeats of [EGSA]-K-T-K-[EQ]-[GQ]-V-X(4). One copy of the 3; approximate repeat lies at 42–56 (TKTKENVVQSVTSVA). Repeat unit 4 spans residues 57–67 (EKTKEQANAVS). Ser67 and Ser72 each carry phosphoserine. The segment at 91 to 123 (TTGVVRKEDLEPPAQDQEAKEQEENEEAKSGED) is disordered. A compositionally biased stretch (basic and acidic residues) spans 107-123 (QEAKEQEENEEAKSGED). Phosphoserine; by BARK1, CaMK2 and CK2 is present on Ser120.

This sequence belongs to the synuclein family. May be a centrosome-associated protein. Interacts with MYOC; affects its secretion and its aggregation. Phosphorylated. Phosphorylation by GRK5 appears to occur on residues distinct from the residue phosphorylated by other kinases. As to expression, highly expressed in brain, particularly in the substantia nigra. Also expressed in the corpus callosum, heart, skeletal muscle, ovary, testis, colon and spleen. Weak expression in pancreas, kidney and lung. Expressed predominantly in the cell bodies and axons of primary sensory neurons, sympathetic neurons and motoneurons.

It is found in the cytoplasm. Its subcellular location is the perinuclear region. It localises to the cytoskeleton. The protein resides in the microtubule organizing center. The protein localises to the centrosome. It is found in the spindle. Plays a role in neurofilament network integrity. May be involved in modulating axonal architecture during development and in the adult. In vitro, increases the susceptibility of neurofilament-H to calcium-dependent proteases. May also function in modulating the keratin network in skin. Activates the MAPK and Elk-1 signal transduction pathway. The polypeptide is Gamma-synuclein (Sncg) (Mus musculus (Mouse)).